A 152-amino-acid polypeptide reads, in one-letter code: Interleukin-1 family member 10 (152 aa).

It belongs to the IL-1 family. Interacts with cargo receptor TMED10; the interaction mediates the translocation from the cytoplasm into the ERGIC (endoplasmic reticulum-Golgi intermediate compartment) and thereby secretion. As to expression, expressed in fetal skin, spleen and tonsil. Expressed mostly in the basal epithelia of skin and in proliferating B-cells of the tonsil.

The protein resides in the cytoplasm. It localises to the secreted. Cytokine with immunomodulatory activity. Alone, does not induce cytokine production, but reduces IL22 and IL17A production by T-cells in response to heat-killed Candida albicans. Reduces IL36G-induced production of IL8 by peripheral blood mononuclear cells. Increases IL6 production by dendritic cells stimulated by bacterial lipopolysaccharides (LPS). Ligand for IL-36R/IL1RL2. This Homo sapiens (Human) protein is Interleukin-1 family member 10.